Consider the following 871-residue polypeptide: Pre-mRNA-processing factor 40 homolog B (871 aa).

2 consecutive WW domains span residues 92–125 and 133–166; these read GPPRALWSEHVAPDGRIYYYNADDKQSVWEKPSV and LLSQCPWKEYKSDTGKPYYYNNQSKESRWTRPKD. Lysine 148 carries the N6-acetyllysine modification. Positions 171 to 277 are disordered; that stretch reads EVLVKQEAAG…RSGLSWSNRE (107 aa). A Glycyl lysine isopeptide (Lys-Gly) (interchain with G-Cter in SUMO2) cross-link involves residue lysine 175. Residues 182-191 are compositionally biased toward low complexity; sequence QQQQLPQTLQ. Over residues 192–211 the composition is skewed to pro residues; it reads PQPPQPQPDPPPVPPGPTPV. Composition is skewed to low complexity over residues 212 to 221 and 245 to 255; these read PTGLLEPEPG and EGPSSSGQHQP. FF domains follow at residues 276-330, 340-397, 410-470, 490-550, 554-610, and 625-682; these read REKA…YKAQ, RLRA…VLFF, RRRN…HIRA, QRKN…YVEE, RFHD…LLEK, and RMRR…FLQV. The interval 690-871 is disordered; it reads HLHTKGRKHG…TLLQQLDDHQ (182 aa). A compositionally biased stretch (basic residues) spans 691-711; it reads LHTKGRKHGRKGKKHHHKRSH. Residues 739–756 are compositionally biased toward low complexity; sequence SESGSEPSSSLDSVESGG. Serine 764 is subject to Phosphoserine. A compositionally biased stretch (basic residues) spans 777–793; sequence RKAKKPKKKTKKRRHKS. Residues 803 to 824 show a composition bias toward basic and acidic residues; the sequence is EEKAGKESDEKEQEQDKDRELQ. Serine 832 is subject to Phosphoserine. Residue lysine 838 forms a Glycyl lysine isopeptide (Lys-Gly) (interchain with G-Cter in SUMO2) linkage. Serine 852 carries the phosphoserine modification.

Belongs to the PRPF40 family. As to quaternary structure, interacts with the N-terminus of HD. As to expression, expressed in the striatum and cortex of the brain (at protein level). Highly expressed in testis, fetal kidney and fetal brain. Moderately expressed in pancreas, skeletal muscle, placenta, brain and heart. Weakly expressed in colon, ileum, ovary, prostate, spleen, kidney and fetal lung.

The protein resides in the nucleus speckle. Functionally, may be involved in pre-mRNA splicing. This is Pre-mRNA-processing factor 40 homolog B (PRPF40B) from Homo sapiens (Human).